The sequence spans 241 residues: Probable transcriptional regulatory protein RSc2190 (241 aa).

It belongs to the TACO1 family.

It is found in the cytoplasm. The polypeptide is Probable transcriptional regulatory protein RSc2190 (Ralstonia nicotianae (strain ATCC BAA-1114 / GMI1000) (Ralstonia solanacearum)).